Reading from the N-terminus, the 2325-residue chain is Protein Ycf2 (2325 aa).

Disordered regions lie at residues 168-189 (SSQL…GTED), 221-251 (TEIE…EMNN), and 947-1006 (KRKK…KRKE). Residues 230 to 240 (KGLSGSSSKSR) are compositionally biased toward low complexity. Composition is skewed to basic and acidic residues over residues 241 to 250 (LFTEGEKEMN) and 955 to 1004 (KRKE…PEKR). Position 1436-1443 (1436-1443 (GSIGSGRS)) interacts with ATP. Disordered regions lie at residues 1510–1529 (YEDR…DYEP), 1855–1996 (LVGS…LLRP), and 2063–2179 (PAEE…DGFS). A compositionally biased stretch (acidic residues) spans 1861 to 1976 (TEEEVEGTEE…VEGTEDEEGE (116 aa)). A compositionally biased stretch (basic and acidic residues) spans 1977-1989 (GTEKDSSQFDNDR). Acidic residues-rich tracts occupy residues 2063-2080 (PAEE…EALE) and 2087-2162 (GEEE…ENDS).

Belongs to the Ycf2 family.

The protein resides in the plastid. It localises to the chloroplast stroma. Probable ATPase of unknown function. Its presence in a non-photosynthetic plant (Epifagus virginiana) and experiments in tobacco indicate that it has an essential function which is probably not related to photosynthesis. The protein is Protein Ycf2 of Oenothera biennis (German evening primrose).